Consider the following 301-residue polypeptide: L-threonate dehydrogenase (301 aa).

Residues 6–34 and T101 contribute to the NAD(+) site; that span reads YSVA…TYGI. K177 is a catalytic residue. Position 245 (K245) interacts with NAD(+).

This sequence belongs to the HIBADH-related family. L-threonate dehydrogenase subfamily.

It catalyses the reaction L-threonate + NAD(+) = 2-dehydro-L-erythronate + NADH + H(+). Catalyzes oxidation of L-threonate to 2-oxo-tetronate. Can use either NAD(+) or NADP(+) as cosubstrate, with a preference for NAD(+). This chain is L-threonate dehydrogenase, found in Haemophilus influenzae (strain ATCC 51907 / DSM 11121 / KW20 / Rd).